The chain runs to 364 residues: 1-acyl-sn-glycerol-3-phosphate acyltransferase epsilon (364 aa).

2 consecutive transmembrane segments (helical) span residues 15-35 and 61-81; these read LLPS…WGVW and MVLF…GDLP. The short motif at 93–98 is the HXXXXD motif element; it reads HQSTVD. Residues 344–364 form a helical membrane-spanning segment; the sequence is LYVNTWIYGTLLGCLWVTIKA.

The protein belongs to the 1-acyl-sn-glycerol-3-phosphate acyltransferase family. In terms of tissue distribution, widely expressed.

The protein localises to the endoplasmic reticulum membrane. Its subcellular location is the nucleus envelope. It localises to the mitochondrion. The enzyme catalyses a 1-acyl-sn-glycero-3-phosphate + an acyl-CoA = a 1,2-diacyl-sn-glycero-3-phosphate + CoA. The catalysed reaction is 1-(9Z-octadecenoyl)-sn-glycero-3-phosphate + tetradecanoyl-CoA = 1-(9Z)-octadecenoyl-2-tetradecanoyl-sn-glycero-3-phosphate + CoA. It catalyses the reaction pentadecanoyl-CoA + 1-(9Z-octadecenoyl)-sn-glycero-3-phosphate = 1-(9Z)-octadecenoyl-2-pentadecanoyl-sn-glycero-3-phosphate + CoA. It carries out the reaction 1-(9Z-octadecenoyl)-sn-glycero-3-phosphate + octadecanoyl-CoA = 1-(9Z-octadecenoyl)-2-octadecanoyl-sn-glycero-3-phosphate + CoA. The enzyme catalyses nonadecanoyl-CoA + 1-(9Z-octadecenoyl)-sn-glycero-3-phosphate = 1-(9Z)-octadecenoyl-2-nonadecanoyl-sn-glycero-3-phosphate + CoA. The catalysed reaction is 1-(9Z-octadecenoyl)-sn-glycero-3-phosphoethanolamine + (9Z)-octadecenoyl-CoA = 1,2-di-(9Z-octadecenoyl)-sn-glycero-3-phosphoethanolamine + CoA. It catalyses the reaction 1-(9Z-octadecenoyl)-sn-glycero-3-phosphocholine + (9Z)-octadecenoyl-CoA = 1,2-di-(9Z-octadecenoyl)-sn-glycero-3-phosphocholine + CoA. It carries out the reaction 1-(9Z-octadecenoyl)-sn-glycero-3-phospho-(1D-myo-inositol) + (5Z,8Z,11Z,14Z)-eicosatetraenoyl-CoA = 1-(9Z-octadecenoyl)-2-(5Z,8Z,11Z,14Z-eicosatetraenoyl)-sn-glycero-3-phospho-1D-myo-inositol + CoA. The enzyme catalyses 1-(9Z-octadecenoyl)-sn-glycero-3-phospho-L-serine + (9Z)-octadecenoyl-CoA = 1,2-di-(9Z)-octadecenoyl-sn-glycero-3-phospho-L-serine + CoA. The catalysed reaction is 1-(9Z-octadecenoyl)-sn-glycero-3-phospho-L-serine + (5Z,8Z,11Z,14Z)-eicosatetraenoyl-CoA = 1-(9Z-octadecenoyl)-2-(5Z,8Z,11Z,14Z-eicosatetraenoyl)-sn-glycero-3-phospho-L-serine + CoA. It catalyses the reaction 1-hexadecanoyl-sn-glycero-3-phosphate + (9Z)-octadecenoyl-CoA = 1-hexadecanoyl-2-(9Z-octadecenoyl)-sn-glycero-3-phosphate + CoA. It carries out the reaction 1-heptadecanoyl-sn-glycero-3-phosphate + (9Z)-octadecenoyl-CoA = 1-heptadecanoyl-2-(9Z)-octadecenoyl-sn-glycero-3-phosphate + CoA. The enzyme catalyses 1-(5Z,8Z,11Z,14Z-eicosatetraenoyl)-sn-glycero-3-phosphate + (9Z)-octadecenoyl-CoA = 1-(5Z,8Z,11Z,14Z)-eicosatetraenoyl-2-(9Z)-octadecenoyl-sn-glycero-3-phosphate + CoA. The catalysed reaction is 1-octadecanoyl-sn-glycero-3-phosphate + (9Z)-octadecenoyl-CoA = 1-octadecanoyl-2-(9Z-octadecenoyl)-sn-glycero-3-phosphate + CoA. It catalyses the reaction 1-(9Z-octadecenoyl)-sn-glycero-3-phosphate + (5Z,8Z,11Z,14Z)-eicosatetraenoyl-CoA = 1-(9Z)-octadecenoyl-2-(5Z,8Z,11Z,14Z)-eicosatetraenoyl-sn-glycero-3-phosphate + CoA. It carries out the reaction heptadecanoyl-CoA + 1-(9Z-octadecenoyl)-sn-glycero-3-phosphate = 1-(9Z)-octadecenoyl-2-heptadecanoyl-sn-glycero-3-phosphate + CoA. The enzyme catalyses 1-(9Z-octadecenoyl)-sn-glycero-3-phosphocholine + (5Z,8Z,11Z,14Z)-eicosatetraenoyl-CoA = 1-(9Z)-octadecenoyl-2-(5Z,8Z,11Z,14Z)-icosatetraenoyl-sn-glycero-3-phosphocholine + CoA. The catalysed reaction is 1-(9Z-octadecenoyl)-sn-glycero-3-phosphate + (9Z)-octadecenoyl-CoA = 1,2-di-(9Z-octadecenoyl)-sn-glycero-3-phosphate + CoA. It catalyses the reaction 1-(9Z-octadecenoyl)-sn-glycero-3-phosphate + hexadecanoyl-CoA = 1-hexadecanoyl-2-(9Z-octadecenoyl)-sn-glycero-3-phosphate + CoA. It participates in phospholipid metabolism; CDP-diacylglycerol biosynthesis; CDP-diacylglycerol from sn-glycerol 3-phosphate: step 2/3. Converts 1-acyl-sn-glycerol-3-phosphate (lysophosphatidic acid or LPA) into 1,2-diacyl-sn-glycerol-3-phosphate (phosphatidic acid or PA) by incorporating an acyl moiety at the sn-2 position of the glycerol backbone. Acts on LPA containing saturated or unsaturated fatty acids C15:0-C20:4 at the sn-1 position using C18:1-CoA as the acyl donor. Also acts on lysophosphatidylethanolamine using oleoyl-CoA, but not arachidonoyl-CoA, and lysophosphatidylinositol using arachidonoyl-CoA, but not oleoyl-CoA. Activity toward lysophosphatidylglycerol not detectable. The sequence is that of 1-acyl-sn-glycerol-3-phosphate acyltransferase epsilon (AGPAT5) from Homo sapiens (Human).